The sequence spans 100 residues: uncharacterized protein (100 aa).

To M.jannaschii MJ1155.1.

This is an uncharacterized protein from Archaeoglobus fulgidus (strain ATCC 49558 / DSM 4304 / JCM 9628 / NBRC 100126 / VC-16).